A 197-amino-acid polypeptide reads, in one-letter code: Phosphoheptose isomerase (197 aa).

The SIS domain maps to 36–197 (LFAALANNGR…IDALLLGDTE (162 aa)). A substrate-binding site is contributed by 51–53 (NGG). Zn(2+)-binding residues include H60 and E64. Substrate-binding positions include E64, 93-94 (ND), 119-121 (STS), S124, and Q174. 2 residues coordinate Zn(2+): Q174 and H182.

Belongs to the SIS family. GmhA subfamily. Homotetramer. The cofactor is Zn(2+).

It localises to the cytoplasm. The catalysed reaction is 2 D-sedoheptulose 7-phosphate = D-glycero-alpha-D-manno-heptose 7-phosphate + D-glycero-beta-D-manno-heptose 7-phosphate. It participates in carbohydrate biosynthesis; D-glycero-D-manno-heptose 7-phosphate biosynthesis; D-glycero-alpha-D-manno-heptose 7-phosphate and D-glycero-beta-D-manno-heptose 7-phosphate from sedoheptulose 7-phosphate: step 1/1. Its function is as follows. Catalyzes the isomerization of sedoheptulose 7-phosphate in D-glycero-D-manno-heptose 7-phosphate. This Bordetella avium (strain 197N) protein is Phosphoheptose isomerase.